Here is a 239-residue protein sequence, read N- to C-terminus: MPSKSSSPQSNSTRKNSCGCCCFSVRKFGFLAVFVAIFAALYSYLDARLEQFYIFNPEHLHDLSQRAIQAHGNDTRAMVDFIVAELDQKIPGNHLNKNEEWIFNNAGGAMGAMYIIHASITEYLIIFGTAIGTEGHTGRHTADDYFNILQGTQVAFVPGTFEPEVYPPGTVHHLRRGEVKQYKMEQSCFALEYARGWIPPMLFFGYADTFTSTLDFPTLWATTRVTGREMITNLLRRKF.

N-linked (GlcNAc...) asparagine glycosylation occurs at Asn11. Residues 27 to 47 form a helical membrane-spanning segment; sequence KFGFLAVFVAIFAALYSYLDA. A glycan (N-linked (GlcNAc...) asparagine) is linked at Asn73.

Belongs to the ERG2 family.

The protein localises to the endoplasmic reticulum membrane. The enzyme catalyses fecosterol = episterol. The protein operates within steroid metabolism; ergosterol biosynthesis. Its function is as follows. C-8 sterol isomerase; part of the third module of ergosterol biosynthesis pathway that includes the late steps of the pathway. Erg2 catalyzes the reaction which results in unsaturation at C-7 in the B ring of sterols and thus converts fecosterol to episterol. The third module or late pathway involves the ergosterol synthesis itself through consecutive reactions that mainly occur in the endoplasmic reticulum (ER) membrane. Firstly, the squalene synthase erg9 catalyzes the condensation of 2 farnesyl pyrophosphate moieties to form squalene, which is the precursor of all steroids. Squalene synthase is crucial for balancing the incorporation of farnesyl diphosphate (FPP) into sterol and nonsterol isoprene synthesis. Secondly, squalene is converted into lanosterol by the consecutive action of the squalene epoxidase erg1 and the lanosterol synthase erg7. Then, the delta(24)-sterol C-methyltransferase erg6 methylates lanosterol at C-24 to produce eburicol. Eburicol is the substrate of the sterol 14-alpha demethylase encoded by cyp51A and cyp51B, to yield 4,4,24-trimethyl ergosta-8,14,24(28)-trienol. The C-14 reductase erg24 then reduces the C14=C15 double bond which leads to 4,4-dimethylfecosterol. A sequence of further demethylations at C-4, involving the C-4 demethylation complex containing the C-4 methylsterol oxidases erg25A or erg25B, the sterol-4-alpha-carboxylate 3-dehydrogenase erg26 and the 3-keto-steroid reductase erg27, leads to the production of fecosterol via 4-methylfecosterol. The C-8 sterol isomerase erg2 then catalyzes the reaction which results in unsaturation at C-7 in the B ring of sterols and thus converts fecosterol to episterol. The sterol-C5-desaturase erg3B then catalyzes the introduction of a C-5 double bond in the B ring to produce 5-dehydroepisterol. The 2 other sterol-C5-desaturases, erg3A and erg3C, seem to be less important in ergosterol biosynthesis. The C-22 sterol desaturase erg5 further converts 5-dehydroepisterol into ergosta-5,7,22,24(28)-tetraen-3beta-ol by forming the C-22(23) double bond in the sterol side chain. Finally, ergosta-5,7,22,24(28)-tetraen-3beta-ol is substrate of the C-24(28) sterol reductases erg4A and erg4B to produce ergosterol. Possible alternative sterol biosynthetic pathways might exist from fecosterol to ergosterol, depending on the activities of the erg3 isoforms. This chain is C-8 sterol isomerase erg2, found in Aspergillus fumigatus (strain ATCC MYA-4609 / CBS 101355 / FGSC A1100 / Af293) (Neosartorya fumigata).